The following is a 73-amino-acid chain: uncharacterized protein (73 aa).

Helical transmembrane passes span 7–27 (LFSSLTFSLTVLFLLLLIPNL) and 47–67 (YFGYPSLGILFAGILSPIIIL).

The protein resides in the cell membrane. This is an uncharacterized protein from Methanocaldococcus jannaschii (strain ATCC 43067 / DSM 2661 / JAL-1 / JCM 10045 / NBRC 100440) (Methanococcus jannaschii).